The following is a 43-amino-acid chain: U5-hexatoxin-Mr1a (43 aa).

Disulfide bonds link C1-C16, C8-C21, C15-C36, and C17-C43.

The protein belongs to the neurotoxin 35 family. Post-translationally, contains 4 disulfide bonds. As to expression, expressed by the venom gland.

It is found in the secreted. Functionally, this toxin blocks the neuromuscular transmission, and also acts on muscle. It exerts an effect of first exciting and then inhibiting the contraction of muscle. This toxin is active only against mammals. This Macrothele raveni (Funnel-web spider) protein is U5-hexatoxin-Mr1a.